Here is a 765-residue protein sequence, read N- to C-terminus: Carboxysome assembly protein CsoS2 (765 aa).

Residues 1–22 (MSTKTSREIALERRKAMSDGGK) show a composition bias toward basic and acidic residues. 2 disordered regions span residues 1–107 (MSTK…RTDV) and 165–229 (REAQ…NKNG). The tract at residues 1-215 (MSTKTSREIA…RSKTGSTSKQ (215 aa)) is N-terminal domain. Residues 7–22 (REIALERRKAMSDGGK) form an N-repeat 1 repeat. The span at 38–63 (SQDINSTGATSSNKKVLTSPSKSNIP) shows a compositional bias: polar residues. Basic and acidic residues predominate over residues 77–87 (SSKELGIERRK). N-repeat repeat units lie at residues 79–94 (KELG…THGK), 158–173 (RDIV…KHGK), and 196–211 (REIS…KTGS). Residues 187 to 207 (RRGDPDLSSREISQRVRELRS) are compositionally biased toward basic and acidic residues. The segment at 216 to 586 (GNGKCRPCGP…LSNCETPPND (371 aa)) is middle region. M-repeat repeat units lie at residues 240-289 (KVGK…GQFC), 300-349 (RASV…KKYC), 358-397 (KVMQ…GDQY), 411-460 (KVGS…EKFC), 470-519 (KVGL…NDNC), and 530-580 (RATV…LSNC). Disordered regions lie at residues 306–328 (TTSG…GDEP) and 367–413 (GLKV…EKVG). The interval 589–734 (YANQEKSASN…AMPPVDNKRN (146 aa)) is C-terminal domain. 2 C-repeat repeats span residues 604 to 648 (SVNS…GTEQ) and 677 to 711 (KKEP…EGVS). Disordered stretches follow at residues 611-637 (EKYS…GPFD) and 656-765 (NMTY…GARG). Over residues 730–741 (DNKRNDETEKPD) the composition is skewed to basic and acidic residues. Residues 735 to 765 (DETEKPDFLITGSSGNTRDGQLVTFSGGARG) form a C-terminal peptide region.

Belongs to the CsoS2 family. Probably interacts with the carboxysome major shell protein CsoS1 via the N-terminal domain. A CsoS1-CsoS1D-CsoS2 complex can be isolated following expression in E.coli. Interacts via its N-terminal repeats with RuBisCO. Post-translationally, unlike H.neapolitanus and predictions for P.marinus strain MIT 9313, this protein is not thought to have ribosomal frameshifting.

Its subcellular location is the carboxysome. Functionally, required for alpha-carboxysome (Cb) assembly, mediates interaction between RuBisCO and the Cb shell. The protein is probably highly flexible. The C-terminal repeats act as the encapsulation signal to target proteins to the Cb; they are necessary and sufficient to target both CsoS2 and foreign proteins to the Cb. The N-terminal repeats of this protein bind simultaneously to both subunits of RuBisCO. Probably also interacts with the major shell proteins (CsoS1); that interaction would increase the local concentration of CsoS2 so that it can condense RuBisCO and full carboxysomes can be formed. There are estimated to be 163 CsoS2 proteins per carboxysome; unlike H.neapolitanus only 1 form is seen. The protein is Carboxysome assembly protein CsoS2 of Prochlorococcus marinus subsp. pastoris (strain CCMP1986 / NIES-2087 / MED4).